The following is a 73-amino-acid chain: U3-agatoxin-Ao1e (73 aa).

The N-terminal stretch at 1-20 is a signal peptide; the sequence is MRTIISLLLLSAMVFAVIEA. The propeptide occupies 21 to 34; that stretch reads ISLEEGLQLFEGER. Disulfide bonds link cysteine 36/cysteine 52, cysteine 43/cysteine 57, cysteine 51/cysteine 67, and cysteine 59/cysteine 65. Asparagine amide is present on asparagine 71.

It belongs to the neurotoxin 07 (Beta/delta-agtx) family. 03 (aga-4) subfamily. Aga sub-subfamily. Expressed by the venom gland.

The protein resides in the secreted. Its function is as follows. Insecticidal neurotoxin that induces an irreversible spastic paralysis when injected into insects. Modifies presynaptic voltage-gated sodium channels (Nav), causing them to open at the normal resting potential of the nerve. This leads to spontaneous release of neurotransmitter and repetitive action potentials in motor neurons. This Agelena orientalis (Funnel-web spider) protein is U3-agatoxin-Ao1e.